A 556-amino-acid polypeptide reads, in one-letter code: Urocanate hydratase (556 aa).

Residues 52–53 (GG), Gln130, 176–178 (GMG), Glu196, Arg201, 242–243 (NA), 263–267 (QTSAH), 273–274 (YL), and Tyr322 each bind NAD(+). Cys410 is a catalytic residue. Gly492 provides a ligand contact to NAD(+).

It belongs to the urocanase family. The cofactor is NAD(+).

The protein localises to the cytoplasm. The catalysed reaction is 4-imidazolone-5-propanoate = trans-urocanate + H2O. It participates in amino-acid degradation; L-histidine degradation into L-glutamate; N-formimidoyl-L-glutamate from L-histidine: step 2/3. Functionally, catalyzes the conversion of urocanate to 4-imidazolone-5-propionate. This Shewanella oneidensis (strain ATCC 700550 / JCM 31522 / CIP 106686 / LMG 19005 / NCIMB 14063 / MR-1) protein is Urocanate hydratase.